Here is a 208-residue protein sequence, read N- to C-terminus: Outer-membrane lipoprotein carrier protein (208 aa).

The N-terminal stretch at 1–22 (MKKRLCAVLLASPLLFSAAVFA) is a signal peptide.

Belongs to the LolA family. As to quaternary structure, monomer.

It localises to the periplasm. Functionally, participates in the translocation of lipoproteins from the inner membrane to the outer membrane. Only forms a complex with a lipoprotein if the residue after the N-terminal Cys is not an aspartate (The Asp acts as a targeting signal to indicate that the lipoprotein should stay in the inner membrane). This Shewanella baltica (strain OS195) protein is Outer-membrane lipoprotein carrier protein.